An 869-amino-acid polypeptide reads, in one-letter code: Protein translocase subunit SecA (869 aa).

Residues glutamine 85, glycine 103 to threonine 107, and aspartate 508 each bind ATP.

It belongs to the SecA family. Monomer and homodimer. Part of the essential Sec protein translocation apparatus which comprises SecA, SecYEG and auxiliary proteins SecDF. Other proteins may also be involved.

It localises to the cell membrane. Its subcellular location is the cytoplasm. It carries out the reaction ATP + H2O + cellular proteinSide 1 = ADP + phosphate + cellular proteinSide 2.. In terms of biological role, part of the Sec protein translocase complex. Interacts with the SecYEG preprotein conducting channel. Has a central role in coupling the hydrolysis of ATP to the transfer of proteins into and across the cell membrane, serving as an ATP-driven molecular motor driving the stepwise translocation of polypeptide chains across the membrane. This Deinococcus geothermalis (strain DSM 11300 / CIP 105573 / AG-3a) protein is Protein translocase subunit SecA.